The following is a 484-amino-acid chain: UDP-N-acetylmuramoyl-L-alanyl-D-glutamate--L-lysine ligase (484 aa).

S43 provides a ligand contact to UDP-N-acetyl-alpha-D-muramoyl-L-alanyl-D-glutamate. 119 to 125 (GTKGKTT) is a binding site for ATP. UDP-N-acetyl-alpha-D-muramoyl-L-alanyl-D-glutamate is bound by residues 161 to 162 (TT), S188, and R196. K230 carries the N6-carboxylysine modification. Residues 405–408 (DDPN) carry the L-lysine recognition motif motif.

It belongs to the MurCDEF family. MurE subfamily. In terms of processing, carboxylation is probably crucial for Mg(2+) binding and, consequently, for the gamma-phosphate positioning of ATP.

It is found in the cytoplasm. The catalysed reaction is UDP-N-acetyl-alpha-D-muramoyl-L-alanyl-D-glutamate + L-lysine + ATP = UDP-N-acetyl-alpha-D-muramoyl-L-alanyl-gamma-D-glutamyl-L-lysine + ADP + phosphate + H(+). Its pathway is cell wall biogenesis; peptidoglycan biosynthesis. Catalyzes the addition of L-lysine to the nucleotide precursor UDP-N-acetylmuramoyl-L-alanyl-D-glutamate (UMAG) in the biosynthesis of bacterial cell-wall peptidoglycan. The protein is UDP-N-acetylmuramoyl-L-alanyl-D-glutamate--L-lysine ligase of Streptococcus agalactiae serotype III (strain NEM316).